The chain runs to 176 residues: RNA pyrophosphohydrolase (176 aa).

The Nudix hydrolase domain occupies 8–159; sequence PYRTCVGMML…KRPVYERVVK (152 aa). Positions 47–68 match the Nudix box motif; sequence GGVDPGEDTWAAAKRELYEETS.

The protein belongs to the Nudix hydrolase family. RppH subfamily. A divalent metal cation is required as a cofactor.

Functionally, accelerates the degradation of transcripts by removing pyrophosphate from the 5'-end of triphosphorylated RNA, leading to a more labile monophosphorylated state that can stimulate subsequent ribonuclease cleavage. The sequence is that of RNA pyrophosphohydrolase from Rhodopseudomonas palustris (strain BisA53).